We begin with the raw amino-acid sequence, 163 residues long: GPI-anchored protein LLG2 (163 aa).

Residues 1 to 23 form the signal peptide; that stretch reads MEISPYCLLSLLPIFLLSGFSLS. N-linked (GlcNAc...) asparagine glycosylation is present at Asn-52. The GPI-anchor amidated serine moiety is linked to residue Ser-135. Residues 136-163 constitute a propeptide, removed in mature form; it reads DSIPRASTTASLAVLSTFLVLCLLFLSS.

Expressed in pollen, pollen tubes, sporophytic pistil tissues, in the early stages of female gametophyte development, and in unfertilized, mature ovules.

It is found in the cell membrane. This Arabidopsis thaliana (Mouse-ear cress) protein is GPI-anchored protein LLG2.